The primary structure comprises 245 residues: MDKNELVQKAKLAEQAERYDDMAACMKRVTEEGGELSNEERNLLSVAYKNVVGARRSSWRVVSSIEQKTEGAEKKQEMSREYREKIEAELREICNDVLNLLDKFLIANATQPESKVFYLKMKGDYYRYLAEVAAGNAKTEIVGQSQKAYQDAFDISKTEMQPTHPIRLGLALNFSVFYYEILNCPDKACALAKAAFDEAIAELDTLSEESYKDSTLIMQLLRDNLTLWTSDTQGDEAEQGEGGEN.

It belongs to the 14-3-3 family. As to quaternary structure, homodimer. In terms of tissue distribution, present in all adult tissues examined with the highest levels in the brain.

Its subcellular location is the cytoplasm. In terms of biological role, adapter protein implicated in the regulation of a large spectrum of both general and specialized signaling pathways. Binds to a large number of partners, usually by recognition of a phosphoserine or phosphothreonine motif. Binding generally results in the modulation of the activity of the binding partner. The chain is 14-3-3 protein zeta (ywhaz) from Xenopus laevis (African clawed frog).